We begin with the raw amino-acid sequence, 183 residues long: Streptavidin-V2 (183 aa).

A signal peptide spans 1–24 (MRKIVVAAIAVSLTTVGITASASA). The Avidin-like domain occupies 37-159 (AEAGITGTWY…GHDTFTKVKP (123 aa)). Biotin is bound by residues Tyr67 and Tyr78. The Cell attachment site; atypical motif lies at 83 to 85 (RYD). Biotin-binding residues include Trp116, Trp132, and Trp144.

Belongs to the avidin/streptavidin family. As to quaternary structure, homotetramer.

The protein localises to the secreted. In terms of biological role, the biological function of streptavidin is not known. Forms a strong non-covalent specific complex with biotin (one molecule of biotin per subunit of streptavidin). This chain is Streptavidin-V2, found in Streptomyces violaceus (Streptomyces venezuelae).